Reading from the N-terminus, the 270-residue chain is Putative pyruvate, phosphate dikinase regulatory protein (270 aa).

Residue 148–155 (GISRTSKT) coordinates ADP.

Belongs to the pyruvate, phosphate/water dikinase regulatory protein family. PDRP subfamily.

It carries out the reaction N(tele)-phospho-L-histidyl/L-threonyl-[pyruvate, phosphate dikinase] + ADP = N(tele)-phospho-L-histidyl/O-phospho-L-threonyl-[pyruvate, phosphate dikinase] + AMP + H(+). The catalysed reaction is N(tele)-phospho-L-histidyl/O-phospho-L-threonyl-[pyruvate, phosphate dikinase] + phosphate + H(+) = N(tele)-phospho-L-histidyl/L-threonyl-[pyruvate, phosphate dikinase] + diphosphate. Bifunctional serine/threonine kinase and phosphorylase involved in the regulation of the pyruvate, phosphate dikinase (PPDK) by catalyzing its phosphorylation/dephosphorylation. The polypeptide is Putative pyruvate, phosphate dikinase regulatory protein (Bacillus mycoides (strain KBAB4) (Bacillus weihenstephanensis)).